A 314-amino-acid chain; its full sequence is uncharacterized protein (314 aa).

Positions 1 to 70 (MAGNSQRRGA…QGRHKKTDDT (70 aa)) are disordered. The span at 43–65 (QRPHHPAGKRAAKAARQAQGRHK) shows a compositional bias: basic residues. 3 residues coordinate S-adenosyl-L-methionine: G265, I285, and L294.

Belongs to the class IV-like SAM-binding methyltransferase superfamily. RNA methyltransferase TrmH family.

This is an uncharacterized protein from Mycolicibacterium vanbaalenii (strain DSM 7251 / JCM 13017 / BCRC 16820 / KCTC 9966 / NRRL B-24157 / PYR-1) (Mycobacterium vanbaalenii).